A 340-amino-acid polypeptide reads, in one-letter code: Ketol-acid reductoisomerase (NADP(+)) (340 aa).

The region spanning 3–183 (VSIYYDKDCD…GGGRTGIIET (181 aa)) is the KARI N-terminal Rossmann domain. Residues 26-29 (FGSQ), K49, S54, and 84-87 (DEIQ) each bind NADP(+). H109 is a catalytic residue. G135 contributes to the NADP(+) binding site. The KARI C-terminal knotted domain occupies 184 to 329 (TFKAETETDL…RELRAMMPWI (146 aa)). D192, E196, E228, and E232 together coordinate Mg(2+). S253 contributes to the substrate binding site.

It belongs to the ketol-acid reductoisomerase family. It depends on Mg(2+) as a cofactor.

The enzyme catalyses (2R)-2,3-dihydroxy-3-methylbutanoate + NADP(+) = (2S)-2-acetolactate + NADPH + H(+). It carries out the reaction (2R,3R)-2,3-dihydroxy-3-methylpentanoate + NADP(+) = (S)-2-ethyl-2-hydroxy-3-oxobutanoate + NADPH + H(+). The protein operates within amino-acid biosynthesis; L-isoleucine biosynthesis; L-isoleucine from 2-oxobutanoate: step 2/4. It functions in the pathway amino-acid biosynthesis; L-valine biosynthesis; L-valine from pyruvate: step 2/4. Its function is as follows. Involved in the biosynthesis of branched-chain amino acids (BCAA). Catalyzes an alkyl-migration followed by a ketol-acid reduction of (S)-2-acetolactate (S2AL) to yield (R)-2,3-dihydroxy-isovalerate. In the isomerase reaction, S2AL is rearranged via a Mg-dependent methyl migration to produce 3-hydroxy-3-methyl-2-ketobutyrate (HMKB). In the reductase reaction, this 2-ketoacid undergoes a metal-dependent reduction by NADPH to yield (R)-2,3-dihydroxy-isovalerate. In Campylobacter lari (strain RM2100 / D67 / ATCC BAA-1060), this protein is Ketol-acid reductoisomerase (NADP(+)).